An 86-amino-acid chain; its full sequence is Small ribosomal subunit protein bS20 (86 aa).

Positions M1–T26 are disordered.

Belongs to the bacterial ribosomal protein bS20 family.

Its function is as follows. Binds directly to 16S ribosomal RNA. The protein is Small ribosomal subunit protein bS20 of Psychromonas ingrahamii (strain DSM 17664 / CCUG 51855 / 37).